Consider the following 812-residue polypeptide: Valine--tRNA ligase (812 aa).

A 'HIGH' region motif is present at residues 46–56 (PTVSGQLHIGH). The 'KMSKS' region signature appears at 536–540 (KMSKS). Residue Lys539 participates in ATP binding.

The protein belongs to the class-I aminoacyl-tRNA synthetase family. ValS type 2 subfamily. Monomer.

The protein localises to the cytoplasm. The enzyme catalyses tRNA(Val) + L-valine + ATP = L-valyl-tRNA(Val) + AMP + diphosphate. Functionally, catalyzes the attachment of valine to tRNA(Val). As ValRS can inadvertently accommodate and process structurally similar amino acids such as threonine, to avoid such errors, it has a 'posttransfer' editing activity that hydrolyzes mischarged Thr-tRNA(Val) in a tRNA-dependent manner. In Rickettsia bellii (strain RML369-C), this protein is Valine--tRNA ligase.